Consider the following 426-residue polypeptide: Protein TolB homolog (426 aa).

Positions Met-1 to Cys-19 are cleaved as a signal peptide.

Belongs to the TolB family.

Its subcellular location is the periplasm. This is Protein TolB homolog from Chlamydia muridarum (strain MoPn / Nigg).